A 196-amino-acid chain; its full sequence is Imidazole glycerol phosphate synthase subunit HisH (196 aa).

The region spanning 2–196 (KVAVVKYNAG…ERVLRNFLDL (195 aa)) is the Glutamine amidotransferase type-1 domain. Cys77 (nucleophile) is an active-site residue. Catalysis depends on residues His178 and Glu180.

Heterodimer of HisH and HisF.

The protein resides in the cytoplasm. The catalysed reaction is 5-[(5-phospho-1-deoxy-D-ribulos-1-ylimino)methylamino]-1-(5-phospho-beta-D-ribosyl)imidazole-4-carboxamide + L-glutamine = D-erythro-1-(imidazol-4-yl)glycerol 3-phosphate + 5-amino-1-(5-phospho-beta-D-ribosyl)imidazole-4-carboxamide + L-glutamate + H(+). It carries out the reaction L-glutamine + H2O = L-glutamate + NH4(+). It functions in the pathway amino-acid biosynthesis; L-histidine biosynthesis; L-histidine from 5-phospho-alpha-D-ribose 1-diphosphate: step 5/9. In terms of biological role, IGPS catalyzes the conversion of PRFAR and glutamine to IGP, AICAR and glutamate. The HisH subunit catalyzes the hydrolysis of glutamine to glutamate and ammonia as part of the synthesis of IGP and AICAR. The resulting ammonia molecule is channeled to the active site of HisF. This is Imidazole glycerol phosphate synthase subunit HisH from Bacteroides thetaiotaomicron (strain ATCC 29148 / DSM 2079 / JCM 5827 / CCUG 10774 / NCTC 10582 / VPI-5482 / E50).